The following is a 425-amino-acid chain: Protein UL117 (425 aa).

A disordered region spans residues 59-83 (PTTTSSSLAPPRDDERRPTPPLRPP).

Belongs to the herpesviridae U84 family.

It is found in the host nucleus. Functionally, plays a role in the inhibition of host DNA replication in the infected cell. Targets the mini-chromosome maintenance (MCM) complex and blocks the accumulation of MCM proteins and their loading onto host chromatin. The sequence is that of Protein UL117 (UL117) from Homo sapiens (Human).